Reading from the N-terminus, the 52-residue chain is Large ribosomal subunit protein bL32c (52 aa).

It belongs to the bacterial ribosomal protein bL32 family.

Its subcellular location is the plastid. It is found in the chloroplast. The polypeptide is Large ribosomal subunit protein bL32c (Nymphaea alba (White water-lily)).